Reading from the N-terminus, the 296-residue chain is Maltose/maltodextrin transport system permease protein MalG (296 aa).

Over 1–12 (MAMVQPKSQKAR) the chain is Cytoplasmic. The chain crosses the membrane as a helical span at residues 13–35 (LFITHLLLLLFIAAIMFPLLMVV). The Periplasmic segment spans residues 36 to 88 (AISLRQGNFATGSLIPEQISWDHWKLALGFSVEQADGRITPPPFPVLLWLWNS). The region spanning 85–281 (LWNSVKVAGI…LPITIVFLLA (197 aa)) is the ABC transmembrane type-1 domain. The helical transmembrane segment at 89 to 111 (VKVAGISAIGIVALSTTCAYAFA) threads the bilayer. Residues 112 to 123 (RMRFPGKATLLK) are Cytoplasmic-facing. Residues 124 to 143 (GMLIFQMFPAVLSLVALYAL) traverse the membrane as a helical segment. Residues 144 to 152 (FDRLGEYIP) lie on the Periplasmic side of the membrane. A helical membrane pass occupies residues 153-175 (FIGLNTHGGVIFAYLGGIALHVW). At 176–204 (TIKGYFETIDSSLEEAAALDGATPWQAFR) the chain is on the cytoplasmic side. A helical membrane pass occupies residues 205 to 227 (LVLLPLSVPILAVVFILSFIAAI). Residues 228-257 (TEVPVASLLLRDVNSYTLAVGMQQYLNPQN) lie on the Periplasmic side of the membrane. The chain crosses the membrane as a helical span at residues 258–280 (YLWGDFAAAAVMSALPITIVFLL). Over 281-296 (AQRWLVNGLTAGGVKG) the chain is Cytoplasmic.

Belongs to the binding-protein-dependent transport system permease family. MalFG subfamily. In terms of assembly, the complex is composed of two ATP-binding proteins (MalK), two transmembrane proteins (MalG and MalF) and a solute-binding protein (MalE).

It is found in the cell inner membrane. Part of the ABC transporter complex MalEFGK involved in maltose/maltodextrin import. Probably responsible for the translocation of the substrate across the membrane. The polypeptide is Maltose/maltodextrin transport system permease protein MalG (malG) (Escherichia coli O157:H7).